The primary structure comprises 118 residues: Large ribosomal subunit protein bL20 (118 aa).

It belongs to the bacterial ribosomal protein bL20 family.

Its function is as follows. Binds directly to 23S ribosomal RNA and is necessary for the in vitro assembly process of the 50S ribosomal subunit. It is not involved in the protein synthesizing functions of that subunit. In Shewanella baltica (strain OS223), this protein is Large ribosomal subunit protein bL20.